Reading from the N-terminus, the 200-residue chain is Lipopolysaccharide core heptose(II)-phosphate phosphatase (200 aa).

The N-terminal stretch at 1–25 (MLAFCRSSLKSKKYFIILLALAAIA) is a signal peptide.

Belongs to the phosphoglycerate mutase family. Ais subfamily.

Its subcellular location is the periplasm. It functions in the pathway bacterial outer membrane biogenesis; lipopolysaccharide metabolism. Catalyzes the dephosphorylation of heptose(II) of the outer membrane lipopolysaccharide core. The polypeptide is Lipopolysaccharide core heptose(II)-phosphate phosphatase (Escherichia coli O7:K1 (strain IAI39 / ExPEC)).